Here is a 198-residue protein sequence, read N- to C-terminus: Na(+)-translocating NADH-quinone reductase subunit E (198 aa).

6 helical membrane-spanning segments follow: residues Ala-11–Val-31, Val-35–Val-55, Phe-77–Val-97, Gly-110–Val-130, Ile-140–Leu-160, and Leu-176–Ile-196.

Belongs to the NqrDE/RnfAE family. As to quaternary structure, composed of six subunits; NqrA, NqrB, NqrC, NqrD, NqrE and NqrF.

Its subcellular location is the cell inner membrane. It carries out the reaction a ubiquinone + n Na(+)(in) + NADH + H(+) = a ubiquinol + n Na(+)(out) + NAD(+). Its function is as follows. NQR complex catalyzes the reduction of ubiquinone-1 to ubiquinol by two successive reactions, coupled with the transport of Na(+) ions from the cytoplasm to the periplasm. NqrA to NqrE are probably involved in the second step, the conversion of ubisemiquinone to ubiquinol. This chain is Na(+)-translocating NADH-quinone reductase subunit E, found in Haemophilus influenzae (strain 86-028NP).